Here is a 403-residue protein sequence, read N- to C-terminus: Argininosuccinate synthase (403 aa).

Residue 10–18 participates in ATP binding; it reads AYSGGLDTS. L-citrulline is bound by residues Y88 and S93. Residue G118 coordinates ATP. L-aspartate contacts are provided by T120, N124, and D125. N124 provides a ligand contact to L-citrulline. L-citrulline is bound by residues R128, S177, S186, E263, and Y275.

The protein belongs to the argininosuccinate synthase family. Type 1 subfamily. Homotetramer.

It is found in the cytoplasm. It catalyses the reaction L-citrulline + L-aspartate + ATP = 2-(N(omega)-L-arginino)succinate + AMP + diphosphate + H(+). It participates in amino-acid biosynthesis; L-arginine biosynthesis; L-arginine from L-ornithine and carbamoyl phosphate: step 2/3. This chain is Argininosuccinate synthase, found in Clostridium perfringens (strain ATCC 13124 / DSM 756 / JCM 1290 / NCIMB 6125 / NCTC 8237 / Type A).